Reading from the N-terminus, the 365-residue chain is UPF0324 membrane protein Cj0999c (365 aa).

Transmembrane regions (helical) follow at residues Ile-12 to Ser-34, His-44 to Phe-63, Leu-83 to Val-100, Phe-105 to Phe-127, Ser-134 to Glu-153, Gly-163 to Phe-185, Ala-197 to Ala-219, Val-234 to Ala-256, Ser-269 to Tyr-288, Ile-303 to Gln-325, and Val-338 to Phe-360.

It belongs to the UPF0324 family.

The protein resides in the cell membrane. The sequence is that of UPF0324 membrane protein Cj0999c from Campylobacter jejuni subsp. jejuni serotype O:2 (strain ATCC 700819 / NCTC 11168).